The chain runs to 120 residues: Chaperonin GroEL (120 aa).

Asp-23–Thr-27 is an ATP binding site.

The protein belongs to the chaperonin (HSP60) family. Forms a cylinder of 14 subunits composed of two heptameric rings stacked back-to-back. Interacts with the co-chaperonin GroES.

The protein localises to the cytoplasm. It catalyses the reaction ATP + H2O + a folded polypeptide = ADP + phosphate + an unfolded polypeptide.. Its function is as follows. Together with its co-chaperonin GroES, plays an essential role in assisting protein folding. The GroEL-GroES system forms a nano-cage that allows encapsulation of the non-native substrate proteins and provides a physical environment optimized to promote and accelerate protein folding. In Mycolicibacterium pulveris (Mycobacterium pulveris), this protein is Chaperonin GroEL.